Consider the following 1030-residue polypeptide: MDFENDQLYNWLQLANLESFYPNFIKKNVSCDSFLSFTMQDYGNVGITSLQDRKKLFHLLQQLKKQTPPISNTSSPVINSNNNNNNNNNNNNNNNNNNNNNNNNNNNNNNNNNNNNNSSGLRQPTSTSSLLSNNNLMSTQTQQSSSSSSSSSLSSKSNSNSDFMQKAQQLLKQRELERQQYAKQQQQQQSTQTKYQSSLKDFDITSSNKNNNLDDFFEDDNLYSQQQQQQQQQQQQQDFEFEEEEEEEDQQQQYDEEEEEEEEYEEDFYKEDLGEIDDGNVLDISDDEPDPNSSCIIVEGSPDEEDDDVEYIPQNESLVNGFGSMKIQQQQQQQFQPLQQQQQQQQQQQQQFYQQQIQQQQQQQQQQQQQQVQQQQQQFNNFNYSGLNEEQIKYYQQQAQYQQQVQQAQQAAIQQAQQAAALAQASQQQLQQQEQQRQQASNFFLDMNEYGQRIRVCVRKRPLNKKEIAKSEKDIIEVLPKKDLIVNEPKTKLDLSKFIEKHKFTFDGVFDESANNYQVYLHTAYPLVDSIFHKGKATCFAYGQTGSGKTHTQMGQQGDGLYALAARDIFHRLETYFKDQLQVCISFFEIYGGKLFDLLNERKKLACRENELQNVVIVGLSEKHVTSPQELMNCIIDGNKIRSTGSTGVNSDSSRSHAILQISLKNIKTNKLHGKFSFIDLAGSERGSDTYDNDKQTRKEGADINKSLLALKECIRALDQSSKHTPFRQSTLTQVLKDSFVGNSRTVMIANISPNQSSSEHTLNTLRYADRVKELGTSESNSNKKPVATYNIPAPLPPPDHLKQNFNDPILIPSTTTTTTTTATAINSQQPIIQQTSQPVSKIKQPVKQQQESQIPQTPQQQQQQQPPQQQPQQQQYNIPQTPQQTQQQFNIPQTPKQQQPIQTQPPMSPPKIDFVNYHRNHVDQFADILKKELISINQFESSKGSIPLENYINNIEQFLDSKQLLINHLRGIIQQHQQQPIQQQQQQQQPIQQQQQSTPQPSQLQTPQQRERARSQLQPPKPSIYSSRN.

The SAM domain occupies 3–66 (FENDQLYNWL…FHLLQQLKKQ (64 aa)). Disordered stretches follow at residues 66-164 (QTPP…SDFM) and 178-308 (RQQY…EDDD). The segment covering 68 to 80 (PPISNTSSPVINS) has biased composition (polar residues). Low complexity-rich tracts occupy residues 81–117 (NNNN…NNNN), 125–164 (TSTS…SDFM), 181–197 (YAKQ…KYQS), and 225–238 (QQQQ…QQQD). Residues 239 to 290 (FEFEEEEEEEDQQQQYDEEEEEEEEYEEDFYKEDLGEIDDGNVLDISDDEPD) are compositionally biased toward acidic residues. The Kinesin motor domain occupies 453 to 775 (RIRVCVRKRP…LRYADRVKEL (323 aa)). An ATP-binding site is contributed by 543–550 (GQTGSGKT). 3 stretches are compositionally biased toward low complexity: residues 826-839 (INSQ…TSQP), 849-906 (QQQE…QTQP), and 981-1009 (PIQQ…QTPQ). Disordered regions lie at residues 826–915 (INSQ…KIDF) and 981–1030 (PIQQ…SSRN).

The protein belongs to the TRAFAC class myosin-kinesin ATPase superfamily. Kinesin family.

The protein localises to the cytoplasm. It localises to the cytoskeleton. Microtubule-associated force-producing protein that plays a role in organelle transport. Its motor activity is directed toward the microtubule's plus end. The sequence is that of Kinesin-related protein 6 (kif6) from Dictyostelium discoideum (Social amoeba).